A 218-amino-acid chain; its full sequence is Ribose-5-phosphate isomerase A (218 aa).

Residues 28-31 (TGST), 81-84 (DGAD), and 94-97 (KGGG) each bind substrate. Residue Glu103 is the Proton acceptor of the active site. Lys121 lines the substrate pocket.

The protein belongs to the ribose 5-phosphate isomerase family. Homodimer.

The enzyme catalyses aldehydo-D-ribose 5-phosphate = D-ribulose 5-phosphate. Its pathway is carbohydrate degradation; pentose phosphate pathway; D-ribose 5-phosphate from D-ribulose 5-phosphate (non-oxidative stage): step 1/1. Catalyzes the reversible conversion of ribose-5-phosphate to ribulose 5-phosphate. This is Ribose-5-phosphate isomerase A from Methylococcus capsulatus (strain ATCC 33009 / NCIMB 11132 / Bath).